A 119-amino-acid polypeptide reads, in one-letter code: Large ribosomal subunit protein bL17 (119 aa).

The protein belongs to the bacterial ribosomal protein bL17 family. As to quaternary structure, part of the 50S ribosomal subunit. Contacts protein L32.

This is Large ribosomal subunit protein bL17 from Psychrobacter arcticus (strain DSM 17307 / VKM B-2377 / 273-4).